A 116-amino-acid polypeptide reads, in one-letter code: MAGRSGDSDEDLLRTVRLIKVLYQSNPPPSSEGTRQARRNRRRRWRERQRQIRSISGWLLSNYLGRPTEPVPFQLPPLERLTLDCNEDCGTSGTQGVGSPQILVESPPVLDSGTKE.

Phosphoserine; by host CK2 is present on residues Ser5 and Ser8. Residues 18-26 are homomultimerization; that stretch reads LIKVLYQSN. Positions 23–48 are disordered; sequence YQSNPPPSSEGTRQARRNRRRRWRER. Positions 34–50 match the Nuclear localization signal and RNA-binding (RRE) motif; that stretch reads TRQARRNRRRRWRERQR. Positions 36-47 are enriched in basic residues; the sequence is QARRNRRRRWRE. The Nuclear export signal and binding to XPO1 signature appears at 73–84; sequence FQLPPLERLTLD. The segment at 90 to 116 is disordered; it reads GTSGTQGVGSPQILVESPPVLDSGTKE. Phosphoserine; by host is present on residues Ser92 and Ser99.

It belongs to the HIV-1 REV protein family. Homomultimer; when bound to the RRE. Multimeric assembly is essential for activity and may involve XPO1. Binds to human KPNB1, XPO1, TNPO1, RANBP5 and IPO7. Interacts with the viral Integrase. Interacts with human KHDRBS1. Interacts with human NAP1; this interaction decreases Rev multimerization and stimulates its activity. Interacts with human DEAD-box helicases DDX3 and DDX24; these interactions may serve for viral RNA export to the cytoplasm and packaging, respectively. Interacts with human PSIP1; this interaction may inhibit HIV-1 DNA integration by promoting dissociation of the Integrase-LEDGF/p75 complex. In terms of processing, asymmetrically arginine dimethylated at one site by host PRMT6. Methylation impairs the RNA-binding activity and export of viral RNA from the nucleus to the cytoplasm. Phosphorylated by protein kinase CK2. Presence of, and maybe binding to the N-terminus of the regulatory beta subunit of CK2 is necessary for CK2-mediated Rev's phosphorylation.

Its subcellular location is the host nucleus. The protein localises to the host nucleolus. It is found in the host cytoplasm. Escorts unspliced or incompletely spliced viral pre-mRNAs (late transcripts) out of the nucleus of infected cells. These pre-mRNAs carry a recognition sequence called Rev responsive element (RRE) located in the env gene, that is not present in fully spliced viral mRNAs (early transcripts). This function is essential since most viral proteins are translated from unspliced or partially spliced pre-mRNAs which cannot exit the nucleus by the pathway used by fully processed cellular mRNAs. Rev itself is translated from a fully spliced mRNA that readily exits the nucleus. Rev's nuclear localization signal (NLS) binds directly to KPNB1/Importin beta-1 without previous binding to KPNA1/Importin alpha-1. KPNB1 binds to the GDP bound form of RAN (Ran-GDP) and targets Rev to the nucleus. In the nucleus, the conversion from Ran-GDP to Ran-GTP dissociates Rev from KPNB1 and allows Rev's binding to the RRE in viral pre-mRNAs. Rev multimerization on the RRE via cooperative assembly exposes its nuclear export signal (NES) to the surface. Rev can then form a complex with XPO1/CRM1 and Ran-GTP, leading to nuclear export of the complex. Conversion from Ran-GTP to Ran-GDP mediates dissociation of the Rev/RRE/XPO1/RAN complex, so that Rev can return to the nucleus for a subsequent round of export. Beside KPNB1, also seems to interact with TNPO1/Transportin-1, RANBP5/IPO5 and IPO7/RANBP7 for nuclear import. The nucleoporin-like HRB/RIP is an essential cofactor that probably indirectly interacts with Rev to release HIV RNAs from the perinuclear region to the cytoplasm. In Human immunodeficiency virus type 1 group M subtype B (isolate YU-2) (HIV-1), this protein is Protein Rev.